The primary structure comprises 388 residues: LL-diaminopimelate aminotransferase (388 aa).

Residues tyrosine 16 and glycine 41 each coordinate substrate. Pyridoxal 5'-phosphate is bound by residues tyrosine 70, 104–105 (SK), tyrosine 129, asparagine 179, tyrosine 210, and 239–241 (SLS). 3 residues coordinate substrate: lysine 105, tyrosine 129, and asparagine 179. An N6-(pyridoxal phosphate)lysine modification is found at lysine 242. A pyridoxal 5'-phosphate-binding site is contributed by arginine 250. Position 368 (arginine 368) interacts with substrate.

It belongs to the class-I pyridoxal-phosphate-dependent aminotransferase family. LL-diaminopimelate aminotransferase subfamily. In terms of assembly, homodimer. It depends on pyridoxal 5'-phosphate as a cofactor.

The enzyme catalyses (2S,6S)-2,6-diaminopimelate + 2-oxoglutarate = (S)-2,3,4,5-tetrahydrodipicolinate + L-glutamate + H2O + H(+). It participates in amino-acid biosynthesis; L-lysine biosynthesis via DAP pathway; LL-2,6-diaminopimelate from (S)-tetrahydrodipicolinate (aminotransferase route): step 1/1. Involved in the synthesis of meso-diaminopimelate (m-DAP or DL-DAP), required for both lysine and peptidoglycan biosynthesis. Catalyzes the direct conversion of tetrahydrodipicolinate to LL-diaminopimelate. This is LL-diaminopimelate aminotransferase from Maridesulfovibrio salexigens (strain ATCC 14822 / DSM 2638 / NCIMB 8403 / VKM B-1763) (Desulfovibrio salexigens).